The following is a 349-amino-acid chain: MSDFQREQRKNEHVEIAMAQSDAMYSDFDKMRFVHHSIPSINVNDIDLTSQTPDLTMAYPVYINAMTGGSEWTKNINEKLAVVARETGLAMAVGSTHAALRNPRMAETFTIARKMNPEGMIFSNVGADVPVEKALEAVELLEAQALQIHVNSPQELVMPEGNREFVTWLDNIASIVSRVSVPVIIKEVGFGMSKELMHDLQQIGVKYVDVSGKGGTNFVDIENERRANKDMDYLSSWGQSTVESLLETTAYQSEISVFASGGLRTPLDAIKSLALGAKATGMSRPFLNQVENNGIAHTVAYVESFIEHMKSIMTMLDAKNIDDLTQKQIVFSPEILSWIEQRSLNIHRG.

R9 to K10 provides a ligand contact to substrate. FMN contacts are provided by residues A65–T67, S95, and N124. S95–H97 contacts substrate. Residue Q154 participates in substrate binding. E155 is a Mg(2+) binding site. Residues K186, S211, T216, G262–R264, and S283–R284 contribute to the FMN site.

Belongs to the IPP isomerase type 2 family. As to quaternary structure, homooctamer. Dimer of tetramers. Requires FMN as cofactor. NADPH is required as a cofactor. Mg(2+) serves as cofactor.

The protein resides in the cytoplasm. The catalysed reaction is isopentenyl diphosphate = dimethylallyl diphosphate. Its function is as follows. Involved in the biosynthesis of isoprenoids. Catalyzes the 1,3-allylic rearrangement of the homoallylic substrate isopentenyl (IPP) to its allylic isomer, dimethylallyl diphosphate (DMAPP). This is Isopentenyl-diphosphate delta-isomerase from Staphylococcus aureus (strain MSSA476).